A 156-amino-acid polypeptide reads, in one-letter code: Endogenous retrovirus group K member 21 Pro protein (156 aa).

Residues 21-96 (FEGLVDTGAD…IPLNLWGRDL (76 aa)) enclose the Peptidase A2 domain. Residue Asp26 is part of the active site. A G-patch domain is found at 111 to 156 (YSPTSQKIMTKMGYIPGKGLGKNEDGIKVPVEAKINQKREGIGYPF).

The protein belongs to the peptidase A2 family. HERV class-II K(HML-2) subfamily. As to quaternary structure, active as a homodimer. Post-translationally, autoproteolytically processed at the N-terminus. Expected C-terminal autoprocessing not detected. The sequence shown is that of the processed Pro protein.

It carries out the reaction Processing at the authentic HIV-1 PR recognition site and release of the mature p17 matrix and the p24 capsid protein, as a result of the cleavage of the -SQNY-|-PIVQ- cleavage site.. Retroviral proteases have roles in the processing of the primary translation products and the maturation of the viral particle. Endogenous Pro proteins may have kept, lost or modified their original function during evolution. This chain is Endogenous retrovirus group K member 21 Pro protein (ERVK-21), found in Homo sapiens (Human).